The following is a 399-amino-acid chain: Succinate--CoA ligase [ADP-forming] subunit beta (399 aa).

Residues 9-254 (KQVLAKYGVP…EDEEDPMELE (246 aa)) enclose the ATP-grasp domain. ATP contacts are provided by residues K46, 53–55 (GRG), E109, C112, and E117. Mg(2+) contacts are provided by N209 and D223. Substrate is bound by residues N274 and 331-333 (GIM).

It belongs to the succinate/malate CoA ligase beta subunit family. In terms of assembly, heterotetramer of two alpha and two beta subunits. Mg(2+) serves as cofactor.

The enzyme catalyses succinate + ATP + CoA = succinyl-CoA + ADP + phosphate. It catalyses the reaction GTP + succinate + CoA = succinyl-CoA + GDP + phosphate. The protein operates within carbohydrate metabolism; tricarboxylic acid cycle; succinate from succinyl-CoA (ligase route): step 1/1. Functionally, succinyl-CoA synthetase functions in the citric acid cycle (TCA), coupling the hydrolysis of succinyl-CoA to the synthesis of either ATP or GTP and thus represents the only step of substrate-level phosphorylation in the TCA. The beta subunit provides nucleotide specificity of the enzyme and binds the substrate succinate, while the binding sites for coenzyme A and phosphate are found in the alpha subunit. This is Succinate--CoA ligase [ADP-forming] subunit beta from Rhodospirillum rubrum (strain ATCC 11170 / ATH 1.1.1 / DSM 467 / LMG 4362 / NCIMB 8255 / S1).